Here is a 241-residue protein sequence, read N- to C-terminus: Tetrahydromethanopterin S-methyltransferase subunit A (241 aa).

Residues 1 to 220 (MANKREPAPG…AKWQAGYYNG (220 aa)) are Cytoplasmic-facing. 5-hydroxybenzimidazolylcob(I)amide is bound at residue His-85. The helical transmembrane segment at 221-241 (KIQGIATGLFLMLLIMGILMF) threads the bilayer.

It belongs to the MtrA family. The complex is composed of 8 subunits; MtrA, MtrB, MtrC, MtrD, MtrE, MtrF, MtrG and MtrH. Requires 5-hydroxybenzimidazolylcob(I)amide as cofactor.

The protein localises to the cell membrane. The enzyme catalyses 5-methyl-5,6,7,8-tetrahydromethanopterin + coenzyme M + 2 Na(+)(in) = 5,6,7,8-tetrahydromethanopterin + methyl-coenzyme M + 2 Na(+)(out). It functions in the pathway one-carbon metabolism; methanogenesis from CO(2); methyl-coenzyme M from 5,10-methylene-5,6,7,8-tetrahydromethanopterin: step 2/2. Part of a complex that catalyzes the formation of methyl-coenzyme M and tetrahydromethanopterin from coenzyme M and methyl-tetrahydromethanopterin. This is an energy-conserving, sodium-ion translocating step. The sequence is that of Tetrahydromethanopterin S-methyltransferase subunit A from Methanocaldococcus jannaschii (strain ATCC 43067 / DSM 2661 / JAL-1 / JCM 10045 / NBRC 100440) (Methanococcus jannaschii).